A 561-amino-acid chain; its full sequence is Terpene synthase 3 (561 aa).

Mg(2+) contacts are provided by aspartate 315, aspartate 319, aspartate 458, and glutamate 466. Positions 315 to 319 (DDVYD) match the DDXXD motif motif.

It belongs to the terpene synthase family. Tpsa subfamily. Mg(2+) is required as a cofactor. The cofactor is Mn(2+). Mostly expressed in stems amd leaves, and, to a lower extent, in roots and fruits.

It catalyses the reaction (2E,6E)-farnesyl diphosphate = germacrene D + diphosphate. The catalysed reaction is (2E,6E)-farnesyl diphosphate = alpha-copaene + diphosphate. It participates in secondary metabolite biosynthesis; terpenoid biosynthesis. In terms of biological role, sesquiterpene synthase involved in the biosynthesis of volatile compounds that contribute to the characteristic flavors of black pepper. Mediates the conversion of (2E,6E)-farnesyl diphosphate (FPP) into alpha-copaene and germacrene D. The protein is Terpene synthase 3 of Piper nigrum (Black pepper).